We begin with the raw amino-acid sequence, 244 residues long: Putative membrane peptidase YdiL (244 aa).

The next 6 helical transmembrane spans lie at 7–27 (FIILTYIIMQFSALIAIPLLF), 44–64 (AQGLWSVISFIACLVVVLLIL), 80–100 (IGLSILWAIAGFFIALFSQGI), 127–147 (AVPLMIIVSSIVGPILEEIIF), 159–179 (TNFFFAGLISSVIFGIVHADL), and 202–222 (IWVPIFAHLMMNTFVVIMQLE). Residues E143 and H176 each act as proton donor/acceptor in the active site.

The protein belongs to the peptidase U48 family.

The protein resides in the cell membrane. Its function is as follows. May function as endopeptidase which proteolytically removes the C-terminal three residues of farnesylated peptides containing the CAAX motif where C is cysteine, A is an aliphatic amino acid and X is any amino acid. The polypeptide is Putative membrane peptidase YdiL (ydiL) (Bacillus subtilis (strain 168)).